A 533-amino-acid polypeptide reads, in one-letter code: Lysine--tRNA ligase 1 (533 aa).

The 'HIGH' region signature appears at 26-34 (PSGHIHIGN). Residues 272 to 276 (AMSSS) carry the 'KMSKS' region motif.

The protein belongs to the class-I aminoacyl-tRNA synthetase family.

Its subcellular location is the cytoplasm. The catalysed reaction is tRNA(Lys) + L-lysine + ATP = L-lysyl-tRNA(Lys) + AMP + diphosphate. The chain is Lysine--tRNA ligase 1 from Methanosarcina acetivorans (strain ATCC 35395 / DSM 2834 / JCM 12185 / C2A).